The sequence spans 144 residues: Large ribosomal subunit protein uL15 (144 aa).

The interval 1–56 (MELNNLKPAEGAKHAKRRVGRGIGSGLGKTAGRGHKGQKSRSGGFHKVGFEGGQMP) is disordered. Residues 21-31 (RGIGSGLGKTA) are compositionally biased toward gly residues.

It belongs to the universal ribosomal protein uL15 family. In terms of assembly, part of the 50S ribosomal subunit.

Functionally, binds to the 23S rRNA. This is Large ribosomal subunit protein uL15 from Burkholderia mallei (strain NCTC 10247).